The chain runs to 2207 residues: Mediator of RNA polymerase II transcription subunit 13-like (2207 aa).

Polar residues predominate over residues 337–355 (VQSAASHLGSQDGGMSTMH). Disordered regions lie at residues 337 to 368 (VQSAASHLGSQDGGMSTMHSPKRSRKTPPKLH), 384 to 403 (AQSKRSQMSTPTREEEAAHS), 431 to 479 (VGPS…KRPL), and 519 to 574 (KYDK…VPVN). Basic residues predominate over residues 356 to 368 (SPKRSRKTPPKLH). Positions 384-394 (AQSKRSQMSTP) are enriched in polar residues. Positions 442 to 453 (PGFSAGLPSSSS) are enriched in low complexity. The segment covering 463–475 (KTTERQEKGDKLQ) has biased composition (basic and acidic residues). Over residues 528 to 539 (SRNTSKQMNLNP) the composition is skewed to polar residues. Over residues 546-555 (PISPLPPTLS) the composition is skewed to pro residues. 2 positions are modified to phosphoserine: serine 548 and serine 555. An LXXLL motif 1 motif is present at residues 664–668 (LQRLL). Residues 731-747 (GTEKDSLKKNKSEDGFG) are compositionally biased toward basic and acidic residues. The disordered stretch occupies residues 731-767 (GTEKDSLKKNKSEDGFGTKDVTTPGHSTPVPDGKNAM). Serine 812 and serine 821 each carry phosphoserine. The disordered stretch occupies residues 816–847 (ELGAVSPALRSSKMPTVGTEERPPGKDGRAAG). A compositionally biased stretch (basic and acidic residues) spans 834–844 (TEERPPGKDGR). Serine 918 carries the post-translational modification Phosphoserine. A disordered region spans residues 1004–1091 (DPDYVNTPQM…STTRPLNSVE (88 aa)). Residues 1009-1019 (NTPQMNTPVTL) show a composition bias toward polar residues. Residues 1020 to 1031 (NSAAPASNSGAG) are compositionally biased toward low complexity. The segment covering 1072-1087 (TDQGSPASTPSTTRPL) has biased composition (polar residues). An LXXLL motif 2 motif is present at residues 1224-1228 (LLLLL). Residues 1379–1400 (LPIPTLLVGYDKEFLTISPFSL) are leucine-zipper. Disordered stretches follow at residues 1523-1652 (LMPP…SVTE) and 2042-2077 (GNLHSSPNSSPVPSPGSPSGIGVGSHFQHSRSQGER). A compositionally biased stretch (low complexity) spans 1541-1593 (PGNAGSLPSNSGSGAPPAGSAFNPTSSSSANPTTSSSSASSGPPGSSAASAPG). Polar residues-rich tracts occupy residues 1612-1624 (QNPSAGGSSTDRT) and 1635-1649 (PGQSCTQSSQDGQDS). Serine 2080 bears the Phosphoserine mark.

Belongs to the Mediator complex subunit 13 family. As to quaternary structure, component of the Mediator complex, which is composed of MED1, MED4, MED6, MED7, MED8, MED9, MED10, MED11, MED12, MED13, MED13L, MED14, MED15, MED16, MED17, MED18, MED19, MED20, MED21, MED22, MED23, MED24, MED25, MED26, MED27, MED29, MED30, MED31, CCNC, CDK8 and CDC2L6/CDK11. The MED12, MED13, CCNC and CDK8 subunits form a distinct module termed the CDK8 module. Mediator containing the CDK8 module is less active than Mediator lacking this module in supporting transcriptional activation. Individual preparations of the Mediator complex lacking one or more distinct subunits have been variously termed ARC, CRSP, DRIP, PC2, SMCC and TRAP. In terms of tissue distribution, highly expressed in heart and weakly expressed in brain, spleen, lung, liver, kidney and testis.

It is found in the nucleus. Functionally, component of the Mediator complex, a coactivator involved in the regulated transcription of nearly all RNA polymerase II-dependent genes. Mediator functions as a bridge to convey information from gene-specific regulatory proteins to the basal RNA polymerase II transcription machinery. Mediator is recruited to promoters by direct interactions with regulatory proteins and serves as a scaffold for the assembly of a functional preinitiation complex with RNA polymerase II and the general transcription factors. This subunit may specifically regulate transcription of targets of the Wnt signaling pathway and SHH signaling pathway. This chain is Mediator of RNA polymerase II transcription subunit 13-like (Med13l), found in Mus musculus (Mouse).